Consider the following 340-residue polypeptide: UDP-3-O-(3-hydroxymyristoyl)glucosamine N-acyltransferase (340 aa).

The Proton acceptor role is filled by H239.

The protein belongs to the transferase hexapeptide repeat family. LpxD subfamily. In terms of assembly, homotrimer.

The catalysed reaction is a UDP-3-O-[(3R)-3-hydroxyacyl]-alpha-D-glucosamine + a (3R)-hydroxyacyl-[ACP] = a UDP-2-N,3-O-bis[(3R)-3-hydroxyacyl]-alpha-D-glucosamine + holo-[ACP] + H(+). It carries out the reaction UDP-3-O-[(3R)-3-hydroxytetradecanoyl]-alpha-D-glucosamine + (3R)-hydroxytetradecanoyl-[ACP] = UDP-2-N,3-O-bis[(3R)-3-hydroxytetradecanoyl]-alpha-D-glucosamine + holo-[ACP] + H(+). It participates in glycolipid biosynthesis; lipid IV(A) biosynthesis; lipid IV(A) from (3R)-3-hydroxytetradecanoyl-[acyl-carrier-protein] and UDP-N-acetyl-alpha-D-glucosamine: step 3/6. Functionally, catalyzes the N-acylation of UDP-3-O-(hydroxytetradecanoyl)glucosamine using 3-hydroxytetradecanoyl-ACP as the acyl donor. Is involved in the biosynthesis of lipid A, a phosphorylated glycolipid that anchors the lipopolysaccharide to the outer membrane of the cell. The polypeptide is UDP-3-O-(3-hydroxymyristoyl)glucosamine N-acyltransferase (Wigglesworthia glossinidia brevipalpis).